A 339-amino-acid polypeptide reads, in one-letter code: Oncoprotein MEQ (339 aa).

Residues 1–80 form a disordered region; the sequence is MSQEPEPGAM…ARRRRRKQTD (80 aa). Serine 42 carries the phosphoserine; by host CDK2 modification. Positions 57–84 are basic motif; the sequence is KQKLERRRKRNRDAARRRRRKQTDYVDK. A bZIP domain is found at 57 to 120; the sequence is KQKLERRRKR…TSLRVQLACH (64 aa). Positions 60–77 are enriched in basic residues; the sequence is LERRRKRNRDAARRRRRK. A Nuclear localization signal motif is present at residues 62–78; that stretch reads RRRKRNRDAARRRRRKQ. Positions 85–113 are leucine-zipper; that stretch reads LHEACEELQRANEHLRKEIRDLRTECTSL. Positions 120-339 are transactivation domain; the sequence is HEPVCPMAVP…VWWFPGDGRP (220 aa). Residues 145-160 are compositionally biased toward pro residues; the sequence is PEPPICTPPPPSPDEP. The segment at 145–172 is disordered; it reads PEPPICTPPPPSPDEPNAPHCSGSQPPI.

The protein belongs to the bZIP family. Jun subfamily. Homodimer. Interacts with host JUN; this interaction allows MEQ to engage in host cell processes by disguising itself as a cellular JUN. Post-translationally, phosphorylated by host CDK2; this phosphorylation greatly reduces the DNA binding activity of MEQ.

It localises to the host nucleus. It is found in the host nucleolus. In terms of biological role, functions as a DNA-binding transcription factor. Promotes transformation, host cell growth, host cell-cycle progression through G1/S phase, and possesses antiapoptotic activity. Forms functional heterodimers with host JUN. These heterodimers bind with high affinity DNA sequences called MEQ-responsive elements MERE I (TGACA/GTCA), while MEQ homodimers bind a second type of sites termed MERE II (ACACA). Both homo and heterodimerization of MEQ are required for oncogenesis. The protein is Oncoprotein MEQ (MDV005) of Gallid herpesvirus 2 (strain Chicken/Md5/ATCC VR-987) (GaHV-2).